Consider the following 154-residue polypeptide: Large ribosomal subunit protein uL15 (154 aa).

Residues 17–44 form a disordered region; sequence KRVGRGIGSGTGKTGGRGVKGQRSRSGV. The segment covering 21-35 has biased composition (gly residues); it reads RGIGSGTGKTGGRGV.

This sequence belongs to the universal ribosomal protein uL15 family. As to quaternary structure, part of the 50S ribosomal subunit.

In terms of biological role, binds to the 23S rRNA. This Bartonella henselae (strain ATCC 49882 / DSM 28221 / CCUG 30454 / Houston 1) (Rochalimaea henselae) protein is Large ribosomal subunit protein uL15.